The chain runs to 358 residues: Gentisate 1,2-dioxygenase (358 aa).

Positions 99–165 (QYLGPREVAP…VTDEPMAWLD (67 aa)) constitute a Cupin type-2 domain. Residues 185–215 (DELSTRETPERSRGERLWGHPGLRPIGRPDQ) form a disordered region. Residues 187–202 (LSTRETPERSRGERLW) are compositionally biased toward basic and acidic residues.

It belongs to the gentisate 1,2-dioxygenase family.

The enzyme catalyses 2,5-dihydroxybenzoate + O2 = 3-maleylpyruvate + H(+). Involved in the degradation of salicylate via a pathway involving coenzyme A derivative. Catalyzes the oxygen-dependent ring fission of gentisate between the carboxyl and proximal hydroxyl groups at positions 1 and 2 of the aromatic ring to form maleylpyruvate. The substrate specificity is strong, since salicylate, catechol, protocatechuic acid, homogenetisate, 2,3-dihydroxybenzoate or 5-aminosalicylate cannot substitute for gentisate in the ring cleavage reaction. The protein is Gentisate 1,2-dioxygenase of Streptomyces sp.